The primary structure comprises 56 residues: Large ribosomal subunit protein bL32 (56 aa).

A disordered region spans residues 1 to 35 (MAVQQNKSTRSKRGMRRSHHALRSVTISVDRTSGE). The segment covering 9 to 22 (TRSKRGMRRSHHAL) has biased composition (basic residues).

It belongs to the bacterial ribosomal protein bL32 family.

The chain is Large ribosomal subunit protein bL32 from Blochmanniella pennsylvanica (strain BPEN).